The sequence spans 341 residues: HTH-type transcriptional repressor CytR (341 aa).

The 55-residue stretch at 10-64 (ATMKDVALKAKVSTATVSRALMNPDKVSQATRNRVEKAAREVGYLPQPMGRNVKR) folds into the HTH lacI-type domain. The H-T-H motif DNA-binding region spans 12-31 (MKDVALKAKVSTATVSRALM).

Its function is as follows. This protein negatively controls the transcription initiation of genes such as deoCABD, udp, and cdd encoding catabolizing enzymes and nupC, nupG, and tsx encoding transporting and pore-forming proteins. Binds cytidine and adenosine as effectors. This is HTH-type transcriptional repressor CytR (cytR) from Escherichia coli (strain K12).